The sequence spans 522 residues: MGSLDIKQESSPLMTNPLDSEEFRRQGYMVIDFLAEYYKNIQKFPVRSQVEPGYLRKRLPESAPYEPESIETILKDVHDDIVPGLTHWQSPNYYAYFPSSGSTAGLLGETLAAGFNVVGFNWISSPASTELESIVMDWLAEMLNLPKSFTFSGDGGGVMMGTTCEAILTTITAARDRILDRIGREHINKLVVYGSDQTHCSFFKSAKIAGISPNNFRQVKTSRVNAFSMRPDALRAAIQADVDAGLVPFFLCTTVGTTSTAAVDPVALLCEVAKDYGMWVHIDAAYAGNACICPEFRHMINGVENADSFSFNAHKWFLTTLDCCCLWVKDPSSLVRCLSTNPEYLKNKATDTQQVVDYKDWQITLSRRFRSLKMWLVLRSYGVDYLRNFLRSHVDMAAYFEQLVRMDGRFEVVVPRSFALVCFRLSASAVIQRLYDSCHRHGHGQKFLEEETLNDVNAELLESVNSAGQIYMTHSLVDGVYMLRFAVGATLTQTHHVTYAWKQVQDHASAVLARRINSICNC.

2 repeat units span residues 75–132 and 135–186. The tract at residues 75-186 is 2 X approximate tandem repeats; the sequence is KDVHDDIVPG…RILDRIGREH (112 aa). Positions 163, 164, 258, and 312 each coordinate pyridoxal 5'-phosphate. K315 is modified (N6-(pyridoxal phosphate)lysine).

Belongs to the group II decarboxylase family. It depends on pyridoxal 5'-phosphate as a cofactor. Strongly expressed in all tissues, particularly in thick roots.

It carries out the reaction L-tyrosine + H(+) = tyramine + CO2. The catalysed reaction is L-dopa + H(+) = dopamine + CO2. Its pathway is aromatic compound metabolism. It participates in alkaloid biosynthesis. In terms of biological role, aromatic amino acid decarboxylase participating in the biosynthesis of natural products derived from phenylethylamine, including mescaline, a natural hallucinogen potentially used in psychotherapeutic treatments. Catalyzes the decarboxylation of L-tyrosine and L-DOPA. The sequence is that of L-tyrosine/L-DOPA decarboxylase 2 from Lophophora williamsii (Peyote).